A 459-amino-acid chain; its full sequence is tRNA(Ile)-lysidine synthase (459 aa).

38-43 (SGGMDS) lines the ATP pocket.

It belongs to the tRNA(Ile)-lysidine synthase family.

The protein resides in the cytoplasm. It catalyses the reaction cytidine(34) in tRNA(Ile2) + L-lysine + ATP = lysidine(34) in tRNA(Ile2) + AMP + diphosphate + H(+). Functionally, ligates lysine onto the cytidine present at position 34 of the AUA codon-specific tRNA(Ile) that contains the anticodon CAU, in an ATP-dependent manner. Cytidine is converted to lysidine, thus changing the amino acid specificity of the tRNA from methionine to isoleucine. This chain is tRNA(Ile)-lysidine synthase, found in Acinetobacter baylyi (strain ATCC 33305 / BD413 / ADP1).